The chain runs to 256 residues: Small ribosomal subunit protein uS2 (256 aa).

Belongs to the universal ribosomal protein uS2 family.

The chain is Small ribosomal subunit protein uS2 from Ruegeria sp. (strain TM1040) (Silicibacter sp.).